The following is a 136-amino-acid chain: MAKFLKAGKVAVVVRGRYAGKKVVIVKPHDEGSKSHPFGHALVAGIERYPSKVTKKHGAKKVAKRTKIKPFIKVVNYNHLLPTRYTLDVEAFKSVVSTETFEQPSQREEAKKVVKKAFEERHQAGKNQWFFSKLRF.

Belongs to the eukaryotic ribosomal protein eL27 family. Component of the large ribosomal subunit (LSU). Mature yeast ribosomes consist of a small (40S) and a large (60S) subunit. The 40S small subunit contains 1 molecule of ribosomal RNA (18S rRNA) and 33 different proteins (encoded by 57 genes). The large 60S subunit contains 3 rRNA molecules (25S, 5.8S and 5S rRNA) and 46 different proteins (encoded by 81 genes).

It is found in the cytoplasm. In terms of biological role, component of the ribosome, a large ribonucleoprotein complex responsible for the synthesis of proteins in the cell. The small ribosomal subunit (SSU) binds messenger RNAs (mRNAs) and translates the encoded message by selecting cognate aminoacyl-transfer RNA (tRNA) molecules. The large subunit (LSU) contains the ribosomal catalytic site termed the peptidyl transferase center (PTC), which catalyzes the formation of peptide bonds, thereby polymerizing the amino acids delivered by tRNAs into a polypeptide chain. The nascent polypeptides leave the ribosome through a tunnel in the LSU and interact with protein factors that function in enzymatic processing, targeting, and the membrane insertion of nascent chains at the exit of the ribosomal tunnel. This chain is Large ribosomal subunit protein eL27B, found in Saccharomyces cerevisiae (strain ATCC 204508 / S288c) (Baker's yeast).